The chain runs to 127 residues: Large-conductance mechanosensitive channel (127 aa).

The next 3 membrane-spanning stretches (helical) occupy residues 19–39, 42–62, and 67–87; these read VGVIVGAAFTAIVNSLVTNII, LLGIFVGSIDFSNLVFTVGSA, and GAFINSVINFLIIAFVVFLLI.

The protein belongs to the MscL family. In terms of assembly, homopentamer.

It localises to the cell membrane. Functionally, channel that opens in response to stretch forces in the membrane lipid bilayer. May participate in the regulation of osmotic pressure changes within the cell. The protein is Large-conductance mechanosensitive channel of Levilactobacillus brevis (strain ATCC 367 / BCRC 12310 / CIP 105137 / JCM 1170 / LMG 11437 / NCIMB 947 / NCTC 947) (Lactobacillus brevis).